The chain runs to 85 residues: MMDETSTTETVAAAELRQFIERVERLEEEKAAIQGDIKDVMGEAKGRGYDTKAIRTIIRLRKKDANERIEEETILQTYMAALGME.

The protein belongs to the UPF0335 family.

The protein is UPF0335 protein Atu3758 of Agrobacterium fabrum (strain C58 / ATCC 33970) (Agrobacterium tumefaciens (strain C58)).